A 360-amino-acid chain; its full sequence is WAT1-related protein At3g28070 (360 aa).

Transmembrane regions (helical) follow at residues 15-35 (AVFL…STLF), 45-65 (IYPF…PSLF), 84-104 (IGLL…GIEY), 108-128 (TLAS…AIIF), 140-160 (SLAK…VIFY), 190-210 (WLIG…SFIL), 224-244 (VSFL…LVVE), 248-268 (PSVW…MAIV), 286-306 (LYLA…GAIF), and 311-331 (LYLG…AVMW). The EamA domain maps to 30–158 (GISTLFKFAT…LSLIGALVVI (129 aa)).

The protein belongs to the drug/metabolite transporter (DMT) superfamily. Plant drug/metabolite exporter (P-DME) (TC 2.A.7.4) family.

The protein localises to the membrane. The chain is WAT1-related protein At3g28070 from Arabidopsis thaliana (Mouse-ear cress).